The following is a 427-amino-acid chain: Enolase (427 aa).

Gln-163 contacts (2R)-2-phosphoglycerate. Glu-205 (proton donor) is an active-site residue. Mg(2+) is bound by residues Asp-242, Glu-285, and Asp-312. (2R)-2-phosphoglycerate contacts are provided by Lys-337, Arg-366, Ser-367, and Lys-388. Lys-337 functions as the Proton acceptor in the catalytic mechanism.

The protein belongs to the enolase family. The cofactor is Mg(2+).

The protein resides in the cytoplasm. It is found in the secreted. The protein localises to the cell surface. The catalysed reaction is (2R)-2-phosphoglycerate = phosphoenolpyruvate + H2O. It participates in carbohydrate degradation; glycolysis; pyruvate from D-glyceraldehyde 3-phosphate: step 4/5. Catalyzes the reversible conversion of 2-phosphoglycerate (2-PG) into phosphoenolpyruvate (PEP). It is essential for the degradation of carbohydrates via glycolysis. The protein is Enolase of Rhodopseudomonas palustris (strain BisA53).